Here is a 152-residue protein sequence, read N- to C-terminus: Protein SprT-like (152 aa).

Residues 6–151 (LQQLVCRISL…SKCLGKLELL (146 aa)) form the SprT-like domain. Histidine 67 provides a ligand contact to Zn(2+). Glutamate 68 is a catalytic residue. Histidine 71 contacts Zn(2+).

The protein belongs to the SprT family. It depends on Zn(2+) as a cofactor.

The protein resides in the cytoplasm. In Lysinibacillus sphaericus (strain C3-41), this protein is Protein SprT-like.